Here is a 372-residue protein sequence, read N- to C-terminus: N-methyl-L-tryptophan oxidase (372 aa).

4 to 34 (DLIIIGSGSVGAAAGYYATRAGLNVLMTDAH) contributes to the FAD binding site. Position 308 is an S-8alpha-FAD cysteine (C308).

The protein belongs to the MSOX/MTOX family. MTOX subfamily. Monomer. Requires FAD as cofactor.

It carries out the reaction N(alpha)-methyl-L-tryptophan + O2 + H2O = L-tryptophan + formaldehyde + H2O2. Catalyzes the oxidative demethylation of N-methyl-L-tryptophan. The polypeptide is N-methyl-L-tryptophan oxidase (Escherichia coli O7:K1 (strain IAI39 / ExPEC)).